A 414-amino-acid chain; its full sequence is 2,3-bisphosphoglycerate-independent phosphoglycerate mutase (414 aa).

This sequence belongs to the BPG-independent phosphoglycerate mutase family. A-PGAM subfamily.

It catalyses the reaction (2R)-2-phosphoglycerate = (2R)-3-phosphoglycerate. It functions in the pathway carbohydrate degradation; glycolysis; pyruvate from D-glyceraldehyde 3-phosphate: step 3/5. In terms of biological role, catalyzes the interconversion of 2-phosphoglycerate and 3-phosphoglycerate. In Saccharolobus islandicus (strain M.14.25 / Kamchatka #1) (Sulfolobus islandicus), this protein is 2,3-bisphosphoglycerate-independent phosphoglycerate mutase.